A 180-amino-acid chain; its full sequence is Small ribosomal subunit protein uS5 (180 aa).

In terms of domain architecture, S5 DRBM spans 24-87; it reads MIEKLVAVNR…EQARKNLVSV (64 aa).

The protein belongs to the universal ribosomal protein uS5 family. As to quaternary structure, part of the 30S ribosomal subunit. Contacts proteins S4 and S8.

In terms of biological role, with S4 and S12 plays an important role in translational accuracy. Located at the back of the 30S subunit body where it stabilizes the conformation of the head with respect to the body. This Stenotrophomonas maltophilia (strain R551-3) protein is Small ribosomal subunit protein uS5.